The following is a 432-amino-acid chain: Mitochondrial distribution and morphology protein 12 (432 aa).

The 432-residue stretch at 1 to 432 (MSIEVDWRAA…VFPSFWTFLI (432 aa)) folds into the SMP-LTD domain. 2 disordered regions span residues 182–273 (WTDP…PRMR) and 354–377 (QQEA…PKRQ). Low complexity predominate over residues 214 to 234 (TSNPTSRPSTSSTLPSHPSAS). Basic and acidic residues-rich tracts occupy residues 243 to 253 (TGKEHGSLAED) and 355 to 364 (QEARGQDDRP).

This sequence belongs to the MDM12 family. As to quaternary structure, component of the ER-mitochondria encounter structure (ERMES) or MDM complex, composed of mmm1, mdm10, mdm12 and mdm34. A mmm1 homodimer associates with one molecule of mdm12 on each side in a pairwise head-to-tail manner, and the SMP-LTD domains of mmm1 and mdm12 generate a continuous hydrophobic tunnel for phospholipid trafficking.

It is found in the mitochondrion outer membrane. It localises to the endoplasmic reticulum membrane. Its function is as follows. Component of the ERMES/MDM complex, which serves as a molecular tether to connect the endoplasmic reticulum (ER) and mitochondria. Components of this complex are involved in the control of mitochondrial shape and protein biogenesis, and function in nonvesicular lipid trafficking between the ER and mitochondria. Mdm12 is required for the interaction of the ER-resident membrane protein mmm1 and the outer mitochondrial membrane-resident beta-barrel protein mdm10. The mdm12-mmm1 subcomplex functions in the major beta-barrel assembly pathway that is responsible for biogenesis of all mitochondrial outer membrane beta-barrel proteins, and acts in a late step after the SAM complex. The mdm10-mdm12-mmm1 subcomplex further acts in the TOM40-specific pathway after the action of the mdm12-mmm1 complex. Essential for establishing and maintaining the structure of mitochondria and maintenance of mtDNA nucleoids. The sequence is that of Mitochondrial distribution and morphology protein 12 from Aspergillus oryzae (strain ATCC 42149 / RIB 40) (Yellow koji mold).